The sequence spans 537 residues: CTP synthase (537 aa).

The amidoligase domain stretch occupies residues 1–268 (MSTKYIFVTG…DQIVCDHLKL (268 aa)). S14 contacts CTP. Residue S14 participates in UTP binding. 15–20 (SIGKGI) is an ATP binding site. Residue Y55 coordinates L-glutamine. D72 contributes to the ATP binding site. Residues D72 and E142 each coordinate Mg(2+). CTP is bound by residues 149–151 (DIE), 189–194 (KTKPTQ), and K225. UTP contacts are provided by residues 189–194 (KTKPTQ) and K225. Residues 293–536 (RIALVGKYVE…VTAAVEKSSD (244 aa)) form the Glutamine amidotransferase type-1 domain. Position 355 (G355) interacts with L-glutamine. C382 acts as the Nucleophile; for glutamine hydrolysis in catalysis. Residues 383–386 (LGMQ), E406, and R464 contribute to the L-glutamine site. Residues H509 and E511 contribute to the active site.

Belongs to the CTP synthase family. Homotetramer.

The enzyme catalyses UTP + L-glutamine + ATP + H2O = CTP + L-glutamate + ADP + phosphate + 2 H(+). It carries out the reaction L-glutamine + H2O = L-glutamate + NH4(+). The catalysed reaction is UTP + NH4(+) + ATP = CTP + ADP + phosphate + 2 H(+). The protein operates within pyrimidine metabolism; CTP biosynthesis via de novo pathway; CTP from UDP: step 2/2. Its activity is regulated as follows. Allosterically activated by GTP, when glutamine is the substrate; GTP has no effect on the reaction when ammonia is the substrate. The allosteric effector GTP functions by stabilizing the protein conformation that binds the tetrahedral intermediate(s) formed during glutamine hydrolysis. Inhibited by the product CTP, via allosteric rather than competitive inhibition. Catalyzes the ATP-dependent amination of UTP to CTP with either L-glutamine or ammonia as the source of nitrogen. Regulates intracellular CTP levels through interactions with the four ribonucleotide triphosphates. In Streptococcus sanguinis (strain SK36), this protein is CTP synthase.